An 895-amino-acid chain; its full sequence is Protein translocase subunit SecA (895 aa).

ATP is bound by residues Gln-90, 108–112 (GEGKS), and Asp-498.

Belongs to the SecA family.

The protein resides in the plastid. Its subcellular location is the chloroplast stroma. The protein localises to the chloroplast thylakoid membrane. It catalyses the reaction ATP + H2O + cellular proteinSide 1 = ADP + phosphate + cellular proteinSide 2.. Has a central role in coupling the hydrolysis of ATP to the transfer of proteins across the thylakoid membrane. The protein is Protein translocase subunit SecA of Cyanidium caldarium (Red alga).